We begin with the raw amino-acid sequence, 400 residues long: Large envelope protein (400 aa).

Residue Met1 is modified to N-acetylmethionine. Gly2 carries N-myristoyl glycine; by host lipidation. A pre-S1 region spans residues 2-119; it reads GGWSSKHRKG…PPLRDTHPQA (118 aa). A pre-S region spans residues 2 to 174; it reads GGWSSKHRKG…FTKTGDPASN (173 aa). Residues 2–181 lie on the Virion surface; in external conformation side of the membrane; sequence GGWSSKHRKG…ASNMESTTSG (180 aa). The Intravirion; in internal conformation segment spans residues 2-253; it reads GGWSSKHRKG…PGYRWMCLRR (252 aa). Residue Trp4 is glycosylated (N-linked (GlcNAc...) asparagine). Residues 89-117 form a disordered region; it reads PAAPPPASTNRQSGRQPTPISPPLRDTHP. Residues 96 to 106 show a composition bias toward polar residues; that stretch reads STNRQSGRQPT. Residues 120-174 form a pre-S2 region; that stretch reads MQWNSTAFHQALQDPRVRGLYFPAGGSSSGTVNPVPNTVSHISSIFTKTGDPASN. Residues 182 to 202 traverse the membrane as a helical segment; it reads FLGPLLVLQAGFFLLTRILTI. Topologically, residues 203–253 are intravirion; in external conformation; it reads PQSLDSWWTSLNFLGGAPGCIGQNSQSQTSNHSPTSCPPTCPGYRWMCLRR. The chain crosses the membrane as a helical span at residues 254–274; sequence FIIFLFILLLCLIFLLVLLDY. At 275–348 the chain is on the virion surface side; that stretch reads QGMLPVCPLL…WASVRFSWLS (74 aa). Asn320 carries N-linked (GlcNAc...) asparagine; by host glycosylation. Residues 349 to 369 traverse the membrane as a helical segment; it reads LLVPFVQWFAGLSPTVWLSVI. At 370 to 375 the chain is on the intravirion side; that stretch reads WMIWYW. A helical membrane pass occupies residues 376-398; it reads GPSLYNILSPFLPLLPIFLCLWV. Residues 399–400 are Virion surface-facing; the sequence is YI.

The protein belongs to the orthohepadnavirus major surface antigen family. In its internal form (Li-HBsAg), interacts with the capsid protein and with the isoform S. Interacts with host chaperone CANX. As to quaternary structure, associates with host chaperone CANX through its pre-S2 N glycan; this association may be essential for isoform M proper secretion. In terms of assembly, interacts with isoform L. Interacts with the antigens of satellite virus HDV (HDVAgs); this interaction is required for encapsidation of HDV genomic RNA. In terms of processing, isoform M is N-terminally acetylated by host at a ratio of 90%, and N-glycosylated by host at the pre-S2 region. Post-translationally, myristoylated.

The protein resides in the virion membrane. The large envelope protein exists in two topological conformations, one which is termed 'external' or Le-HBsAg and the other 'internal' or Li-HBsAg. In its external conformation the protein attaches the virus to cell receptors and thereby initiating infection. This interaction determines the species specificity and liver tropism. This attachment induces virion internalization predominantly through caveolin-mediated endocytosis. The large envelope protein also assures fusion between virion membrane and endosomal membrane. In its internal conformation the protein plays a role in virion morphogenesis and mediates the contact with the nucleocapsid like a matrix protein. Its function is as follows. The middle envelope protein plays an important role in the budding of the virion. It is involved in the induction of budding in a nucleocapsid independent way. In this process the majority of envelope proteins bud to form subviral lipoprotein particles of 22 nm of diameter that do not contain a nucleocapsid. The protein is Large envelope protein of Homo sapiens (Human).